Reading from the N-terminus, the 454-residue chain is Protein phosphatase 1F (454 aa).

A compositionally biased stretch (polar residues) spans 1-12 (MSSGAPQKSSPM). Positions 1-28 (MSSGAPQKSSPMASGAEETPGFLDTLLQ) are disordered. In terms of domain architecture, PPM-type phosphatase spans 156–413 (LVSIHAIRNT…DNITVMVVFL (258 aa)). Asp198, Gly199, Asp360, and Asp404 together coordinate Mn(2+). A disordered region spans residues 419–454 (LLEGGNQGEGDPQAEGRRQDLPSSLPEPETQAPPRS). Ser454 is subject to Phosphoserine.

This sequence belongs to the PP2C family. In terms of assembly, associates with FEM1B. Mg(2+) serves as cofactor. The cofactor is Mn(2+).

It carries out the reaction O-phospho-L-seryl-[protein] + H2O = L-seryl-[protein] + phosphate. The catalysed reaction is O-phospho-L-threonyl-[protein] + H2O = L-threonyl-[protein] + phosphate. Dephosphorylates and concomitantly deactivates CaM-kinase II activated upon autophosphorylation, and CaM-kinases IV and I activated upon phosphorylation by CaM-kinase kinase. Promotes apoptosis. The protein is Protein phosphatase 1F (PPM1F) of Homo sapiens (Human).